A 265-amino-acid polypeptide reads, in one-letter code: tRNA (guanine-N(7)-)-methyltransferase (265 aa).

A compositionally biased stretch (basic and acidic residues) spans 1-16; sequence MNHDDPNASGVPHDDA. The tract at residues 1-40 is disordered; it reads MNHDDPNASGVPHDDANDAAPASASDAARATGHADDESSP. A compositionally biased stretch (low complexity) spans 18–31; the sequence is DAAPASASDAARAT. Glutamate 95, glutamate 120, aspartate 147, and aspartate 170 together coordinate S-adenosyl-L-methionine. Aspartate 170 is a catalytic residue. Substrate is bound by residues lysine 174, aspartate 206, and 241–244; that span reads TKFE.

This sequence belongs to the class I-like SAM-binding methyltransferase superfamily. TrmB family.

It catalyses the reaction guanosine(46) in tRNA + S-adenosyl-L-methionine = N(7)-methylguanosine(46) in tRNA + S-adenosyl-L-homocysteine. It participates in tRNA modification; N(7)-methylguanine-tRNA biosynthesis. In terms of biological role, catalyzes the formation of N(7)-methylguanine at position 46 (m7G46) in tRNA. The polypeptide is tRNA (guanine-N(7)-)-methyltransferase (Burkholderia thailandensis (strain ATCC 700388 / DSM 13276 / CCUG 48851 / CIP 106301 / E264)).